The primary structure comprises 248 residues: Adenosylcobinamide-GDP ribazoletransferase (248 aa).

The next 6 helical transmembrane spans lie at 36-56 (FFLP…YLGL), 59-79 (FLPA…VTGG), 114-134 (GTIA…SLVL), 137-157 (YSIA…FLCL), 170-190 (IFIG…ILAL), and 199-219 (ATII…LLCL).

Belongs to the CobS family. Requires Mg(2+) as cofactor.

It is found in the cell membrane. The enzyme catalyses alpha-ribazole + adenosylcob(III)inamide-GDP = adenosylcob(III)alamin + GMP + H(+). It carries out the reaction alpha-ribazole 5'-phosphate + adenosylcob(III)inamide-GDP = adenosylcob(III)alamin 5'-phosphate + GMP + H(+). Its pathway is cofactor biosynthesis; adenosylcobalamin biosynthesis; adenosylcobalamin from cob(II)yrinate a,c-diamide: step 7/7. Its function is as follows. Joins adenosylcobinamide-GDP and alpha-ribazole to generate adenosylcobalamin (Ado-cobalamin). Also synthesizes adenosylcobalamin 5'-phosphate from adenosylcobinamide-GDP and alpha-ribazole 5'-phosphate. In Clostridium botulinum (strain Kyoto / Type A2), this protein is Adenosylcobinamide-GDP ribazoletransferase.